Reading from the N-terminus, the 293-residue chain is Large ribosomal RNA subunit accumulation protein YCED homolog 1, chloroplastic (293 aa).

The N-terminal 42 residues, 1 to 42 (MYYPQPTVSLAAAVALLRPSLRRHSQRASSLLRSSTPPPWVS), are a transit peptide targeting the chloroplast.

The protein belongs to the DUF177 domain family. Highly expressed in shoots and leaves. Detected in roots, embryos and endosperm.

Its subcellular location is the plastid. It localises to the chloroplast. Plays a role in synthesis, processing and/or stability of 23S rRNA. Required for embryogenesis. May be involved in RPL23 transcript levels regulation in non-photosynthetic plastids. This Zea mays (Maize) protein is Large ribosomal RNA subunit accumulation protein YCED homolog 1, chloroplastic.